A 322-amino-acid chain; its full sequence is Serine/threonine-protein phosphatase PP1 isozyme 6 (322 aa).

The residue at position 1 (Met-1) is an N-acetylmethionine. Mn(2+) contacts are provided by Asp-61, His-63, Asp-89, and Asn-121. His-122 acts as the Proton donor in catalysis. The Mn(2+) site is built by His-170 and His-245. A disordered region spans residues 303-322 (GFNNNVPRPGTPPHKGGKGR).

This sequence belongs to the PPP phosphatase family. PP-1 subfamily. Requires Mn(2+) as cofactor. In terms of tissue distribution, strongly up-regulated within developing flowers, especially in the tapetum, the developing and mature pollen and in the ovaries.

It localises to the nucleus. It is found in the cytoplasm. The enzyme catalyses O-phospho-L-seryl-[protein] + H2O = L-seryl-[protein] + phosphate. It carries out the reaction O-phospho-L-threonyl-[protein] + H2O = L-threonyl-[protein] + phosphate. With respect to regulation, phosphatase activity is strongly reduced by the protein phosphatase inhibitor 2 (I-2). Its function is as follows. Serine/threonine-protein phosphatase that possesses phosphatase activity toward para-nitrophenyl phosphate (pNPP) in vitro. The protein is Serine/threonine-protein phosphatase PP1 isozyme 6 of Arabidopsis thaliana (Mouse-ear cress).